A 486-amino-acid polypeptide reads, in one-letter code: Glutamate--tRNA ligase (486 aa).

A 'HIGH' region motif is present at residues Pro11–Asn21. Residues Lys255–Arg259 carry the 'KMSKS' region motif. ATP is bound at residue Lys258.

It belongs to the class-I aminoacyl-tRNA synthetase family. Glutamate--tRNA ligase type 1 subfamily. As to quaternary structure, monomer.

The protein localises to the cytoplasm. It catalyses the reaction tRNA(Glu) + L-glutamate + ATP = L-glutamyl-tRNA(Glu) + AMP + diphosphate. In terms of biological role, catalyzes the attachment of glutamate to tRNA(Glu) in a two-step reaction: glutamate is first activated by ATP to form Glu-AMP and then transferred to the acceptor end of tRNA(Glu). This is Glutamate--tRNA ligase from Streptococcus pneumoniae (strain CGSP14).